Here is a 453-residue protein sequence, read N- to C-terminus: Pup--protein ligase (453 aa).

E9 contributes to the Mg(2+) binding site. Residue R53 coordinates ATP. Mg(2+) is bound at residue Y55. The active-site Proton acceptor is D57. E63 lines the Mg(2+) pocket. Residues T66 and W420 each contribute to the ATP site.

It belongs to the Pup ligase/Pup deamidase family. Pup-conjugating enzyme subfamily.

It catalyses the reaction ATP + [prokaryotic ubiquitin-like protein]-L-glutamate + [protein]-L-lysine = ADP + phosphate + N(6)-([prokaryotic ubiquitin-like protein]-gamma-L-glutamyl)-[protein]-L-lysine.. Its pathway is protein degradation; proteasomal Pup-dependent pathway. It functions in the pathway protein modification; protein pupylation. In terms of biological role, catalyzes the covalent attachment of the prokaryotic ubiquitin-like protein modifier Pup to the proteasomal substrate proteins, thereby targeting them for proteasomal degradation. This tagging system is termed pupylation. The ligation reaction involves the side-chain carboxylate of the C-terminal glutamate of Pup and the side-chain amino group of a substrate lysine. The chain is Pup--protein ligase from Streptomyces avermitilis (strain ATCC 31267 / DSM 46492 / JCM 5070 / NBRC 14893 / NCIMB 12804 / NRRL 8165 / MA-4680).